The primary structure comprises 299 residues: Regucalcin (299 aa).

E18 lines the a divalent metal cation pocket. 3 residues coordinate substrate: R101, N103, and E121. Residues N154 and D204 each contribute to the a divalent metal cation site. The active-site Proton donor/acceptor is the D204. 2 positions are modified to N6-succinyllysine: K244 and K253.

Belongs to the SMP-30/CGR1 family. In terms of assembly, monomer. It depends on Zn(2+) as a cofactor. The cofactor is Mn(2+). Requires Ca(2+) as cofactor. Mg(2+) is required as a cofactor.

It localises to the cytoplasm. The catalysed reaction is D-glucono-1,5-lactone + H2O = D-gluconate + H(+). It participates in cofactor biosynthesis; L-ascorbate biosynthesis via UDP-alpha-D-glucuronate pathway; L-ascorbate from UDP-alpha-D-glucuronate: step 3/4. Gluconolactonase with low activity towards other sugar lactones, including gulonolactone and galactonolactone. Catalyzes a key step in ascorbic acid (vitamin C) biosynthesis. Can also hydrolyze diisopropyl phosphorofluoridate and phenylacetate (in vitro). Calcium-binding protein. Modulates Ca(2+) signaling, and Ca(2+)-dependent cellular processes and enzyme activities. This Sus scrofa (Pig) protein is Regucalcin (RGN).